A 297-amino-acid chain; its full sequence is Protein-methionine-sulfoxide reductase catalytic subunit MsrP (297 aa).

Positions 1–35 form a signal peptide, tat-type signal; sequence MLITPEKLYKQRRNFLKLGAGALISSSVLASKLSA. Residues 62 to 63, Cys-116, Thr-151, Asn-201, Arg-206, and 217 to 219 each bind Mo-molybdopterin; these read YE and SIK.

Belongs to the MsrP family. In terms of assembly, heterodimer of a catalytic subunit (MsrP) and a heme-binding subunit (MsrQ). Requires Mo-molybdopterin as cofactor. Predicted to be exported by the Tat system. The position of the signal peptide cleavage has not been experimentally proven.

The protein localises to the periplasm. It carries out the reaction L-methionyl-[protein] + a quinone + H2O = L-methionyl-(S)-S-oxide-[protein] + a quinol. The enzyme catalyses L-methionyl-[protein] + a quinone + H2O = L-methionyl-(R)-S-oxide-[protein] + a quinol. In terms of biological role, part of the MsrPQ system that repairs oxidized periplasmic proteins containing methionine sulfoxide residues (Met-O), using respiratory chain electrons. Thus protects these proteins from oxidative-stress damage caused by reactive species of oxygen and chlorine generated by the host defense mechanisms. MsrPQ is essential for the maintenance of envelope integrity under bleach stress, rescuing a wide series of structurally unrelated periplasmic proteins from methionine oxidation. The catalytic subunit MsrP is non-stereospecific, being able to reduce both (R-) and (S-) diastereoisomers of methionine sulfoxide. The chain is Protein-methionine-sulfoxide reductase catalytic subunit MsrP from Campylobacter jejuni subsp. jejuni serotype O:2 (strain ATCC 700819 / NCTC 11168).